Here is a 129-residue protein sequence, read N- to C-terminus: Large ribosomal subunit protein uL22 (129 aa).

It belongs to the universal ribosomal protein uL22 family. Part of the 50S ribosomal subunit.

Its function is as follows. This protein binds specifically to 23S rRNA; its binding is stimulated by other ribosomal proteins, e.g. L4, L17, and L20. It is important during the early stages of 50S assembly. It makes multiple contacts with different domains of the 23S rRNA in the assembled 50S subunit and ribosome. In terms of biological role, the globular domain of the protein is located near the polypeptide exit tunnel on the outside of the subunit, while an extended beta-hairpin is found that lines the wall of the exit tunnel in the center of the 70S ribosome. The protein is Large ribosomal subunit protein uL22 of Brucella abortus (strain 2308).